Here is a 286-residue protein sequence, read N- to C-terminus: Pantothenate synthetase (286 aa).

30–37 contributes to the ATP binding site; it reads MGNLHRGH. The active-site Proton donor is the His37. Gln61 serves as a coordination point for (R)-pantoate. Beta-alanine is bound at residue Gln61. ATP is bound at residue 149 to 152; that stretch reads GEKD. Gln155 serves as a coordination point for (R)-pantoate. Residues Val178 and 186-189 each bind ATP; that span reads LSSR.

It belongs to the pantothenate synthetase family. In terms of assembly, homodimer.

The protein localises to the cytoplasm. It catalyses the reaction (R)-pantoate + beta-alanine + ATP = (R)-pantothenate + AMP + diphosphate + H(+). It functions in the pathway cofactor biosynthesis; (R)-pantothenate biosynthesis; (R)-pantothenate from (R)-pantoate and beta-alanine: step 1/1. In terms of biological role, catalyzes the condensation of pantoate with beta-alanine in an ATP-dependent reaction via a pantoyl-adenylate intermediate. The sequence is that of Pantothenate synthetase from Nitrosococcus oceani (strain ATCC 19707 / BCRC 17464 / JCM 30415 / NCIMB 11848 / C-107).